The primary structure comprises 113 residues: Large ribosomal subunit protein uL22 (113 aa).

It belongs to the universal ribosomal protein uL22 family. Part of the 50S ribosomal subunit.

Functionally, this protein binds specifically to 23S rRNA; its binding is stimulated by other ribosomal proteins, e.g. L4, L17, and L20. It is important during the early stages of 50S assembly. It makes multiple contacts with different domains of the 23S rRNA in the assembled 50S subunit and ribosome. In terms of biological role, the globular domain of the protein is located near the polypeptide exit tunnel on the outside of the subunit, while an extended beta-hairpin is found that lines the wall of the exit tunnel in the center of the 70S ribosome. The protein is Large ribosomal subunit protein uL22 of Roseiflexus sp. (strain RS-1).